The chain runs to 497 residues: tRNA (adenine(58)-N(1))-methyltransferase non-catalytic subunit TRM6 (497 aa).

2 disordered regions span residues 1–20 (MEGSGEQPGPQPQHPGDHRI) and 69–100 (TSGGSLQPKKKREEPTAETKEAGTDNRNIVDD). Residues 79–100 (KREEPTAETKEAGTDNRNIVDD) show a composition bias toward basic and acidic residues. 94–104 (NRNIVDDGKSQ) is a substrate binding site. A Phosphothreonine modification is found at T107. Residues 145-154 (KYIKKKKKKY) and 175-182 (REPGKINH) contribute to the substrate site. Residues 276 to 354 (SSEPKDSALV…EKQRRQEEQR (79 aa)) are disordered. Phosphoserine occurs at positions 298 and 305. Residues 327–354 (DPEHKGPKERGSKKDYIQEKQRRQEEQR) show a composition bias toward basic and acidic residues. Substrate-binding positions include R349, R377, 415-423 (RERGGVINL), and 434-441 (QVLPDRSH). A disordered region spans residues 472–497 (SNASTLESHETEEPAAKKRKCPESDS). Basic and acidic residues predominate over residues 478–497 (ESHETEEPAAKKRKCPESDS).

This sequence belongs to the TRM6/GCD10 family. As to quaternary structure, heterotetramer; composed of two copies of TRMT6 and two copies of TRMT61A. As to expression, expressed in brain, liver, testis and ovary.

It localises to the nucleus. Its function is as follows. Substrate-binding subunit of tRNA (adenine-N(1)-)-methyltransferase, which catalyzes the formation of N(1)-methyladenine at position 58 (m1A58) in initiator methionyl-tRNA. Together with the TRMT61A catalytic subunit, part of a mRNA N(1)-methyltransferase complex that mediates methylation of adenosine residues at the N(1) position of a small subset of mRNAs: N(1) methylation takes place in tRNA T-loop-like structures of mRNAs and is only present at low stoichiometries. This Homo sapiens (Human) protein is tRNA (adenine(58)-N(1))-methyltransferase non-catalytic subunit TRM6 (TRMT6).